The primary structure comprises 94 residues: Pyrimidine/purine nucleoside phosphorylase (94 aa).

The protein belongs to the nucleoside phosphorylase PpnP family.

It catalyses the reaction a purine D-ribonucleoside + phosphate = a purine nucleobase + alpha-D-ribose 1-phosphate. It carries out the reaction adenosine + phosphate = alpha-D-ribose 1-phosphate + adenine. The enzyme catalyses cytidine + phosphate = cytosine + alpha-D-ribose 1-phosphate. The catalysed reaction is guanosine + phosphate = alpha-D-ribose 1-phosphate + guanine. It catalyses the reaction inosine + phosphate = alpha-D-ribose 1-phosphate + hypoxanthine. It carries out the reaction thymidine + phosphate = 2-deoxy-alpha-D-ribose 1-phosphate + thymine. The enzyme catalyses uridine + phosphate = alpha-D-ribose 1-phosphate + uracil. The catalysed reaction is xanthosine + phosphate = alpha-D-ribose 1-phosphate + xanthine. In terms of biological role, catalyzes the phosphorolysis of diverse nucleosides, yielding D-ribose 1-phosphate and the respective free bases. Can use uridine, adenosine, guanosine, cytidine, thymidine, inosine and xanthosine as substrates. Also catalyzes the reverse reactions. In Vibrio parahaemolyticus serotype O3:K6 (strain RIMD 2210633), this protein is Pyrimidine/purine nucleoside phosphorylase.